A 319-amino-acid polypeptide reads, in one-letter code: Bidirectional sugar transporter SWEET15 (319 aa).

Topologically, residues 1-10 (MAFMSMERST) are extracellular. The chain crosses the membrane as a helical span at residues 11–31 (WAFTFGILGNLISLMVFLSPL). Positions 13–99 (FTFGILGNLI…AMYLAYAPKS (87 aa)) constitute a MtN3/slv 1 domain. Residues 32-50 (PTFYRVYRKKSTEGFQSTP) are Cytoplasmic-facing. The helical transmembrane segment at 51-71 (YVVTLFSCMLWMYYAFVKSGA) threads the bilayer. Position 72 (Glu72) is a topological domain, extracellular. A helical transmembrane segment spans residues 73–93 (LLVTINGVGCVIETVYLAMYL). The Cytoplasmic portion of the chain corresponds to 94–106 (AYAPKSARMLTAK). A helical transmembrane segment spans residues 107–127 (MLLGLNIGLFGVIALVTLLLS). Over 128-134 (RGELRVH) the chain is Extracellular. Residues 135-155 (VLGWICVAVSLSVFAAPLSII) traverse the membrane as a helical segment. The MtN3/slv 2 domain maps to 135–219 (VLGWICVAVS…ALYMAYRSKK (85 aa)). At 156–167 (RLVIRTKSVEFM) the chain is on the cytoplasmic side. A helical membrane pass occupies residues 168 to 188 (PFSLSFFLVLSAVIWFLYGLL). Over 189–191 (KKD) the chain is Extracellular. Residues 192 to 212 (VFVALPNVLGFVFGVAQMALY) traverse the membrane as a helical segment. The Cytoplasmic portion of the chain corresponds to 213-319 (MAYRSKKPLV…KPDMAIVVEV (107 aa)).

The protein belongs to the SWEET sugar transporter family. In terms of assembly, forms homooligomers and/or heterooligomers.

Its subcellular location is the cell membrane. In terms of biological role, mediates both low-affinity uptake and efflux of sugar across the plasma membrane. In Oryza sativa subsp. indica (Rice), this protein is Bidirectional sugar transporter SWEET15 (SWEET15).